Consider the following 309-residue polypeptide: MMALPKAGIIFNDIKPAAARAAAELTEKFQDAGYRVYQTTGWGGILGFPRPDSPVCHTPIDRLAAEGFDEAMPFAIVLGGDGTVLAAARQVAPFDIPLLTINTGHMGFLTEGYLNQIHPAIDTLLAGQYALEDRSMIEVRVFRDERLIWEALALNEAVLHKEPLSGICHFEVAIGRHNIVDIAADGVIVATPTGSTAYALSAGGPVITPDVQVLQLIPICPHSLAARGLVFADTESLVVHPPTNHQHLILSLDGNSGCYIWPGDQVRIRRARYRTRLIRLQPPEFFALLREKLGWGLPHIAKPLSVELP.

Asp-81 functions as the Proton acceptor in the catalytic mechanism. NAD(+) contacts are provided by residues 81-82 (DG), 155-156 (NE), Asp-185, 196-201 (TAYALS), and Asn-255.

Belongs to the NAD kinase family. Requires a divalent metal cation as cofactor.

The protein resides in the cytoplasm. It catalyses the reaction NAD(+) + ATP = ADP + NADP(+) + H(+). Functionally, involved in the regulation of the intracellular balance of NAD and NADP, and is a key enzyme in the biosynthesis of NADP. Catalyzes specifically the phosphorylation on 2'-hydroxyl of the adenosine moiety of NAD to yield NADP. This is NAD kinase 2 from Gloeobacter violaceus (strain ATCC 29082 / PCC 7421).